The following is a 189-amino-acid chain: Protein GrpE (189 aa).

Residues 1–20 (MSDQQHSAPQNAAATASPSD) show a composition bias toward polar residues. The disordered stretch occupies residues 1-29 (MSDQQHSAPQNAAATASPSDSPEAVEATM).

The protein belongs to the GrpE family. In terms of assembly, homodimer.

Its subcellular location is the cytoplasm. Functionally, participates actively in the response to hyperosmotic and heat shock by preventing the aggregation of stress-denatured proteins, in association with DnaK and GrpE. It is the nucleotide exchange factor for DnaK and may function as a thermosensor. Unfolded proteins bind initially to DnaJ; upon interaction with the DnaJ-bound protein, DnaK hydrolyzes its bound ATP, resulting in the formation of a stable complex. GrpE releases ADP from DnaK; ATP binding to DnaK triggers the release of the substrate protein, thus completing the reaction cycle. Several rounds of ATP-dependent interactions between DnaJ, DnaK and GrpE are required for fully efficient folding. This chain is Protein GrpE, found in Paracidovorax citrulli (strain AAC00-1) (Acidovorax citrulli).